The primary structure comprises 434 residues: Pectate lyase (434 aa).

Residues 1 to 22 (MKAAQFFLYSLLFFASAALSSA) form the signal peptide. 2 N-linked (GlcNAc...) asparagine glycosylation sites follow: Asn-68 and Asn-97. Ca(2+)-binding residues include Asp-232, Asp-256, and Asp-260. Arg-312 is a catalytic residue.

It belongs to the polysaccharide lyase 1 family. Ca(2+) serves as cofactor.

It catalyses the reaction Eliminative cleavage of (1-&gt;4)-alpha-D-galacturonan to give oligosaccharides with 4-deoxy-alpha-D-galact-4-enuronosyl groups at their non-reducing ends.. The protein operates within glycan metabolism; pectin degradation; 2-dehydro-3-deoxy-D-gluconate from pectin: step 2/5. The chain is Pectate lyase from Lilium longiflorum (Trumpet lily).